Reading from the N-terminus, the 232-residue chain is dTTP/UTP pyrophosphatase (232 aa).

Aspartate 103 functions as the Proton acceptor in the catalytic mechanism.

This sequence belongs to the Maf family. YhdE subfamily. A divalent metal cation is required as a cofactor.

Its subcellular location is the cytoplasm. The enzyme catalyses dTTP + H2O = dTMP + diphosphate + H(+). It catalyses the reaction UTP + H2O = UMP + diphosphate + H(+). In terms of biological role, nucleoside triphosphate pyrophosphatase that hydrolyzes dTTP and UTP. May have a dual role in cell division arrest and in preventing the incorporation of modified nucleotides into cellular nucleic acids. The sequence is that of dTTP/UTP pyrophosphatase from Bartonella henselae (strain ATCC 49882 / DSM 28221 / CCUG 30454 / Houston 1) (Rochalimaea henselae).